Here is a 146-residue protein sequence, read N- to C-terminus: Large ribosomal subunit protein uL15 (146 aa).

Positions 1-13 (MKLHELHSAEGSR) are enriched in basic and acidic residues. Residues 1-55 (MKLHELHSAEGSRRNRKRVGRGTSSGYGKTSGRGQKGQLARQGGHTRLGFEGGQM) are disordered. Residues 23 to 35 (TSSGYGKTSGRGQ) are compositionally biased toward gly residues.

The protein belongs to the universal ribosomal protein uL15 family. In terms of assembly, part of the 50S ribosomal subunit.

Binds to the 23S rRNA. In Lactobacillus helveticus (strain DPC 4571), this protein is Large ribosomal subunit protein uL15.